The chain runs to 481 residues: 6-phosphogluconate dehydrogenase, decarboxylating (481 aa).

NADP(+) contacts are provided by residues 11 to 16 (GLAVMG), 34 to 36 (NRT), 76 to 78 (VKG), and Asn-104. Substrate is bound by residues Asn-104 and 130-132 (SGG). Lys-184 (proton acceptor) is an active-site residue. 187-188 (HN) contributes to the substrate binding site. Glu-191 acts as the Proton donor in catalysis. The substrate site is built by Tyr-192, Lys-259, Arg-286, Arg-445, and His-451.

The protein belongs to the 6-phosphogluconate dehydrogenase family. As to quaternary structure, homodimer.

The catalysed reaction is 6-phospho-D-gluconate + NADP(+) = D-ribulose 5-phosphate + CO2 + NADPH. The protein operates within carbohydrate degradation; pentose phosphate pathway; D-ribulose 5-phosphate from D-glucose 6-phosphate (oxidative stage): step 3/3. Its function is as follows. Catalyzes the oxidative decarboxylation of 6-phosphogluconate to ribulose 5-phosphate and CO(2), with concomitant reduction of NADP to NADPH. This is 6-phosphogluconate dehydrogenase, decarboxylating (Pgd) from Drosophila simulans (Fruit fly).